Consider the following 92-residue polypeptide: Sec-independent protein translocase protein TatA (92 aa).

Residues 1 to 21 form a helical membrane-spanning segment; that stretch reads MGIFDWKHWIVILVVVVLVFG. The segment at 43 to 92 is disordered; sequence MNDDEKPADPTVTPAQPVPPVQPQATAQANPPHTIDVQAQKVEEPIRKDV. The span at 65-74 shows a compositional bias: low complexity; it reads PQATAQANPP. Residues 83-92 are compositionally biased toward basic and acidic residues; sequence KVEEPIRKDV.

The protein belongs to the TatA/E family. As to quaternary structure, the Tat system comprises two distinct complexes: a TatABC complex, containing multiple copies of TatA, TatB and TatC subunits, and a separate TatA complex, containing only TatA subunits. Substrates initially bind to the TatABC complex, which probably triggers association of the separate TatA complex to form the active translocon.

The protein resides in the cell inner membrane. Functionally, part of the twin-arginine translocation (Tat) system that transports large folded proteins containing a characteristic twin-arginine motif in their signal peptide across membranes. TatA could form the protein-conducting channel of the Tat system. This chain is Sec-independent protein translocase protein TatA, found in Pseudomonas fluorescens (strain Pf0-1).